A 409-amino-acid chain; its full sequence is MATSVGHRCLGLLHGVAPWRSSLHPCEITALSQSLQPLRKLPFRAFRTDARKIHTAPARTMFLLRPVPILLATGGGYAGYRQYEKYRERELEKLGLEIPPKLAGHWEVALYKSVPTRLLSRAWGRLNQVELPHWLRRPVYSLYIWTFGVNMKEAAVEDLHHYRNLSEFFRRKLKPQARPVCGLHSVISPSDGRILNFGQVKNCEVEQVKGVTYSLESFLGPRTCTEDLPFPPATSCDSFKNQLVTREGNELYHCVIYLAPGDYHCFHSPTDWTVSHRRHFPGSLMSVNPGMARWIKELFCHNERVVLTGDWKHGFFSLTAVGATNVGSIRIYFDQDLHTNSPRHSKGSYNDFSFVTHTNREGVPMRKGEHLGEFNLGSTIVLIFEAPKDFNFQLKTGQKIRFGEALGSL.

The transit peptide at 1–52 directs the protein to the mitochondrion; sequence MATSVGHRCLGLLHGVAPWRSSLHPCEITALSQSLQPLRKLPFRAFRTDARK. The Mitochondrial matrix segment spans residues 53 to 63; it reads IHTAPARTMFL. Residues 64–82 form a helical membrane-spanning segment; sequence LRPVPILLATGGGYAGYRQ. Residues 83–409 lie on the Mitochondrial intermembrane side of the membrane; it reads YEKYRERELE…IRFGEALGSL (327 aa). Residues Asp-191, His-267, and Ser-378 each act as charge relay system; for autoendoproteolytic cleavage activity in the active site. Residue Ser-378 is the Schiff-base intermediate with substrate; via pyruvic acid; for decarboxylase activity of the active site. Ser-378 carries the post-translational modification Pyruvic acid (Ser); by autocatalysis.

The protein belongs to the phosphatidylserine decarboxylase family. PSD-B subfamily. Eukaryotic type I sub-subfamily. As to quaternary structure, heterodimer of a large membrane-associated beta subunit and a small pyruvoyl-containing alpha subunit. The cofactor is pyruvate. In terms of processing, is synthesized initially as an inactive proenzyme. Formation of the active enzyme involves a self-maturation process in which the active site pyruvoyl group is generated from an internal serine residue via an autocatalytic post-translational modification. Two non-identical subunits are generated from the proenzyme in this reaction, and the pyruvate is formed at the N-terminus of the alpha chain, which is derived from the carboxyl end of the proenzyme. The autoendoproteolytic cleavage occurs by a canonical serine protease mechanism, in which the side chain hydroxyl group of the serine supplies its oxygen atom to form the C-terminus of the beta chain, while the remainder of the serine residue undergoes an oxidative deamination to produce ammonia and the pyruvoyl prosthetic group on the alpha chain. During this reaction, the Ser that is part of the protease active site of the proenzyme becomes the pyruvoyl prosthetic group, which constitutes an essential element of the active site of the mature decarboxylase.

The protein resides in the mitochondrion inner membrane. Its subcellular location is the lipid droplet. It is found in the cytoplasm. It carries out the reaction a 1,2-diacyl-sn-glycero-3-phospho-L-serine + H(+) = a 1,2-diacyl-sn-glycero-3-phosphoethanolamine + CO2. The protein operates within phospholipid metabolism; phosphatidylethanolamine biosynthesis. Functionally, catalyzes the formation of phosphatidylethanolamine (PtdEtn) from phosphatidylserine (PtdSer). Plays a central role in phospholipid metabolism and in the interorganelle trafficking of phosphatidylserine. May be involved in lipid droplet biogenesis at the endoplasmic reticulum membrane. The chain is Phosphatidylserine decarboxylase proenzyme, mitochondrial from Pongo abelii (Sumatran orangutan).